Reading from the N-terminus, the 250-residue chain is tRNA (guanine-N(1)-)-methyltransferase (250 aa).

S-adenosyl-L-methionine-binding positions include G116 and 136–141 (IGDYVL).

The protein belongs to the RNA methyltransferase TrmD family. Homodimer.

The protein localises to the cytoplasm. The catalysed reaction is guanosine(37) in tRNA + S-adenosyl-L-methionine = N(1)-methylguanosine(37) in tRNA + S-adenosyl-L-homocysteine + H(+). Functionally, specifically methylates guanosine-37 in various tRNAs. The sequence is that of tRNA (guanine-N(1)-)-methyltransferase from Pseudomonas putida (strain ATCC 700007 / DSM 6899 / JCM 31910 / BCRC 17059 / LMG 24140 / F1).